Reading from the N-terminus, the 319-residue chain is L-lactate dehydrogenase (319 aa).

Residues valine 11, aspartate 32, arginine 37, tyrosine 62, and 76 to 77 (GV) each bind NAD(+). Substrate-binding positions include glutamine 79, arginine 85, and 117-120 (NPVD). Residues 115–117 (VTN) and serine 140 each bind NAD(+). Residue 145–148 (DTAR) coordinates substrate. The beta-D-fructose 1,6-bisphosphate site is built by arginine 150 and histidine 165. The active-site Proton acceptor is histidine 172. Tyrosine 217 carries the phosphotyrosine modification. Threonine 226 lines the substrate pocket.

Belongs to the LDH/MDH superfamily. LDH family. In terms of assembly, homotetramer.

It localises to the cytoplasm. It catalyses the reaction (S)-lactate + NAD(+) = pyruvate + NADH + H(+). It participates in fermentation; pyruvate fermentation to lactate; (S)-lactate from pyruvate: step 1/1. Its activity is regulated as follows. Allosterically activated by fructose 1,6-bisphosphate (FBP). Catalyzes the conversion of lactate to pyruvate. This Thermotoga sp. (strain RQ2) protein is L-lactate dehydrogenase.